We begin with the raw amino-acid sequence, 220 residues long: Germin-like protein subfamily T member 2 (220 aa).

The N-terminal stretch at 1 to 27 (MTTLQISSSLFRSFLLVICVFVIPSLS) is a signal peptide. A disulfide bridge connects residues Cys-37 and Cys-52. A Cupin type-1 domain is found at 64-212 (SGLGGPLNTS…TFRTDDVTVN (149 aa)). N-linked (GlcNAc...) asparagine glycosylation occurs at Asn-71. Residues His-112, His-114, and Glu-119 each coordinate Mn(2+). Asn-136 carries an N-linked (GlcNAc...) asparagine glycan. Position 158 (His-158) interacts with Mn(2+).

Belongs to the germin family. In terms of assembly, oligomer (believed to be a pentamer but probably hexamer).

Its subcellular location is the secreted. The protein localises to the extracellular space. The protein resides in the apoplast. May play a role in plant defense. Probably has no oxalate oxidase activity even if the active site is conserved. The polypeptide is Germin-like protein subfamily T member 2 (Arabidopsis thaliana (Mouse-ear cress)).